The chain runs to 487 residues: Protein FAM221B (487 aa).

2 stretches are compositionally biased toward polar residues: residues 1-13 (MEANKTTEGPQDT) and 36-48 (HETPLQPSSSQKH). 2 disordered regions span residues 1–103 (MEAN…QSVT) and 132–289 (QLSP…VTSR). Low complexity predominate over residues 81–103 (PPVKSSSSGLLSLPPQLSPQSVT). Basic and acidic residues-rich tracts occupy residues 227 to 236 (ESEHFPKHSF) and 243 to 253 (AKEDESTKEGE). Phosphoserine is present on serine 248.

The protein belongs to the FAM221 family.

The protein is Protein FAM221B (Fam221b) of Mus musculus (Mouse).